We begin with the raw amino-acid sequence, 203 residues long: LexA repressor (203 aa).

The H-T-H motif DNA-binding region spans Val29–Lys49. Residues Ser126 and Lys163 each act as for autocatalytic cleavage activity in the active site.

The protein belongs to the peptidase S24 family. In terms of assembly, homodimer.

It carries out the reaction Hydrolysis of Ala-|-Gly bond in repressor LexA.. In terms of biological role, represses a number of genes involved in the response to DNA damage (SOS response), including recA and lexA. In the presence of single-stranded DNA, RecA interacts with LexA causing an autocatalytic cleavage which disrupts the DNA-binding part of LexA, leading to derepression of the SOS regulon and eventually DNA repair. In Pelotomaculum thermopropionicum (strain DSM 13744 / JCM 10971 / SI), this protein is LexA repressor.